Consider the following 246-residue polypeptide: UDP-N-acetyl-D-mannosaminuronic acid transferase (246 aa).

Belongs to the glycosyltransferase 26 family.

It catalyses the reaction UDP-N-acetyl-alpha-D-mannosaminouronate + N-acetyl-alpha-D-glucosaminyl-di-trans,octa-cis-undecaprenyl diphosphate = beta-D-ManNAcA-(1-&gt;4)-alpha-D-GlcNAc-di-trans,octa-cis-undecaprenyl diphosphate + UDP + H(+). It participates in bacterial outer membrane biogenesis; enterobacterial common antigen biosynthesis. Its function is as follows. Catalyzes the synthesis of Und-PP-GlcNAc-ManNAcA (Lipid II), the second lipid-linked intermediate involved in enterobacterial common antigen (ECA) synthesis. This is UDP-N-acetyl-D-mannosaminuronic acid transferase from Salmonella schwarzengrund (strain CVM19633).